The sequence spans 204 residues: Urease accessory protein UreG (204 aa).

12-19 (GPVGSGKT) is a GTP binding site.

The protein belongs to the SIMIBI class G3E GTPase family. UreG subfamily. As to quaternary structure, homodimer. UreD, UreF and UreG form a complex that acts as a GTP-hydrolysis-dependent molecular chaperone, activating the urease apoprotein by helping to assemble the nickel containing metallocenter of UreC. The UreE protein probably delivers the nickel.

It is found in the cytoplasm. Its function is as follows. Facilitates the functional incorporation of the urease nickel metallocenter. This process requires GTP hydrolysis, probably effectuated by UreG. This is Urease accessory protein UreG from Azotobacter vinelandii (strain DJ / ATCC BAA-1303).